We begin with the raw amino-acid sequence, 367 residues long: Germination protease (367 aa).

The propeptide occupies 1 to 15 (MKEPLDLSKYSVRTD).

It belongs to the peptidase A25 family. Homotetramer. In terms of processing, autoproteolytically processed. The inactive tetrameric zymogen termed p46 autoprocesses to a smaller form termed p41, which is active only during spore germination.

It carries out the reaction Endopeptidase action with P4 Glu or Asp, P1 preferably Glu &gt; Asp, P1' hydrophobic and P2' Ala.. In terms of biological role, initiates the rapid degradation of small, acid-soluble proteins during spore germination. The chain is Germination protease from Bacillus thuringiensis subsp. konkukian (strain 97-27).